Here is a 110-residue protein sequence, read N- to C-terminus: uncharacterized protein (110 aa).

This is an uncharacterized protein from Yersinia enterocolitica.